The sequence spans 593 residues: Glutamyl-tRNA(Gln) amidotransferase subunit B, mitochondrial (593 aa).

The transit peptide at 1–49 (MLRPWLRQSTRAARSLPCCQCPRPYSSRLPTLTSPSSSVRRLQTSASES) directs the protein to the mitochondrion. Low complexity predominate over residues 27 to 42 (SRLPTLTSPSSSVRRL). Residues 27–80 (SRLPTLTSPSSSVRRLQTSASESQDRVPLRKQLKQNAKALKAEKRQRRESEEAS) form a disordered region. Residues 66 to 80 (LKAEKRQRRESEEAS) show a composition bias toward basic and acidic residues.

It belongs to the GatB/GatE family. GatB subfamily. In terms of assembly, subunit of the heterotrimeric GatCAB amidotransferase (AdT) complex, composed of A, B and C subunits.

Its subcellular location is the mitochondrion. It carries out the reaction L-glutamyl-tRNA(Gln) + L-glutamine + ATP + H2O = L-glutaminyl-tRNA(Gln) + L-glutamate + ADP + phosphate + H(+). Its function is as follows. Allows the formation of correctly charged Gln-tRNA(Gln) through the transamidation of misacylated Glu-tRNA(Gln) in the mitochondria. The reaction takes place in the presence of glutamine and ATP through an activated gamma-phospho-Glu-tRNA(Gln). The protein is Glutamyl-tRNA(Gln) amidotransferase subunit B, mitochondrial of Aspergillus oryzae (strain ATCC 42149 / RIB 40) (Yellow koji mold).